The sequence spans 1344 residues: Centrosomal P4.1-associated protein (1344 aa).

Disordered regions lie at residues 67-123 (SSEE…NNDL) and 187-225 (PGTL…ASNV). The segment covering 211–225 (SYSNPTQENSCASNV) has biased composition (polar residues). Phosphoserine is present on Ser248. The disordered stretch occupies residues 257 to 300 (QEAHVKRNDLKEESPAHPSGEGALPRWEKKMGRSQEGKDVNLQK). Basic and acidic residues-rich tracts occupy residues 259 to 271 (AHVK…EESP) and 282 to 297 (RWEK…KDVN). Ser304 is subject to Phosphoserine. Positions 307–382 (VVNIDERPIK…FTNAKSKFQK (76 aa)) are alpha/beta-tubulin binding. Disordered stretches follow at residues 347-407 (QEAE…DRQH) and 425-470 (TVKK…KKRD). Residues 388-398 (LASTQSPSEDQ) show a composition bias toward polar residues. The residue at position 528 (Ser528) is a Phosphoserine. A phosphoserine; by PLK2 mark is found at Ser577 and Ser583. Disordered regions lie at residues 600 to 626 (RLSS…SNCS) and 672 to 735 (TSEI…DTGA). The segment covering 709–720 (VGDRVFSNREDS) has biased composition (basic and acidic residues). At Ser748 the chain carries Phosphoserine. The interval 887 to 1344 (QPPEFMVCFI…DGNVLMDTEM (458 aa)) is interaction with STIL. Residues 1105-1133 (QGNLSRRIKSAPPRDLGSSDKGQAALPRE) form a disordered region.

Belongs to the TCP10 family. Forms homodimers. Associates with microtubules plus ends; binds to beta-tubulin subunits exposed on microtubule outer surface at its distal tip; also associates with microtubule lattice. Associated with the gamma-tubulin complex. Interacts with the head domain of EPB41. Interacts with LYST. Interacts with CEP152 (via C-terminus). Interacts with STIL. Forms a complex with STIL and SASS6. In terms of processing, phosphorylation at Ser-577 and Ser-583 by PLK2 is required for procentriole formation and centriole elongation. Phosphorylation by PLK2 oscillates during the cell cycle: it increases at G1/S transition and decreases during the exit from mitosis. Phosphorylation at Ser-583 is also mediated by PLK4 but is not a critical step in PLK4 function in procentriole assembly.

Its subcellular location is the cytoplasm. It is found in the cytoskeleton. The protein localises to the microtubule organizing center. The protein resides in the centrosome. It localises to the centriole. In terms of biological role, plays an important role in cell division and centrosome function by participating in centriole duplication. Inhibits microtubule nucleation from the centrosome. Involved in the regulation of slow processive growth of centriolar microtubules. Acts as microtubule plus-end tracking protein that stabilizes centriolar microtubules and inhibits microtubule polymerization and extension from the distal ends of centrioles. Required for centriole elongation and for STIL-mediated centriole amplification. Required for the recruitment of CEP295 to the proximal end of new-born centrioles at the centriolar microtubule wall during early S phase in a PLK4-dependent manner. May be involved in the control of centriolar-microtubule growth by acting as a regulator of tubulin release. The protein is Centrosomal P4.1-associated protein (Cpap) of Mus musculus (Mouse).